Here is a 377-residue protein sequence, read N- to C-terminus: Nitric oxide reductase FlRd-NAD(+) reductase (377 aa).

The protein belongs to the FAD-dependent oxidoreductase family. FAD serves as cofactor.

The protein localises to the cytoplasm. The catalysed reaction is 2 reduced [nitric oxide reductase rubredoxin domain] + NAD(+) + H(+) = 2 oxidized [nitric oxide reductase rubredoxin domain] + NADH. Its pathway is nitrogen metabolism; nitric oxide reduction. Functionally, one of at least two accessory proteins for anaerobic nitric oxide (NO) reductase. Reduces the rubredoxin moiety of NO reductase. The polypeptide is Nitric oxide reductase FlRd-NAD(+) reductase (Salmonella heidelberg (strain SL476)).